The chain runs to 238 residues: MGHEWIDAEREFKWSEDVKVESEVTEIVLVRHGETTWNAAGRIQGQIESDLNEVGLKQAVAIAERLGKEERPVAVYSSDLKRAKDTALMIAKTCFCPEVIEVPDLKERHVGSLQGLYWKEGAEKEPEAYSAFFSSQNDLEIPGGGESFDQLADRSMDALEQIAKKHKGERVIVVTHGGVLRAIYLRITQASSAGKLLNASVNVVHLRDQKWIIDSWSDVSHLSSVGFLQRGFDGDAKP.

Histidine 32 acts as the Tele-phosphohistidine intermediate in catalysis. Glutamate 107 (proton donor/acceptor) is an active-site residue.

The protein belongs to the phosphoglycerate mutase family.

It catalyses the reaction O-phospho-L-serine + H2O = L-serine + phosphate. The enzyme catalyses O-phospho-D-serine + H2O = D-serine + phosphate. Its function is as follows. Phosphoglycerate mutase-like protein lacking PGM activity, but having a low metal-independent phosphoserine phosphatase activity in vitro. May be involved in serine biosynthesis. This Arabidopsis thaliana (Mouse-ear cress) protein is Metal-independent phosphoserine phosphatase (IPSP).